We begin with the raw amino-acid sequence, 75 residues long: Large ribosomal subunit protein bL31 (75 aa).

The protein belongs to the bacterial ribosomal protein bL31 family. Type A subfamily. In terms of assembly, part of the 50S ribosomal subunit.

Binds the 23S rRNA. The chain is Large ribosomal subunit protein bL31 from Chlorobaculum tepidum (strain ATCC 49652 / DSM 12025 / NBRC 103806 / TLS) (Chlorobium tepidum).